The chain runs to 333 residues: Ornithine carbamoyltransferase (333 aa).

Carbamoyl phosphate is bound by residues Ser56–Thr59, Gln83, Arg107, and His134–Gln137. Residues Asn167, Asp231, and Ser235–Met236 each bind L-ornithine. Residues Cys273–Leu274 and Arg318 each bind carbamoyl phosphate.

This sequence belongs to the aspartate/ornithine carbamoyltransferase superfamily. OTCase family.

Its subcellular location is the cytoplasm. It catalyses the reaction carbamoyl phosphate + L-ornithine = L-citrulline + phosphate + H(+). It functions in the pathway amino-acid biosynthesis; L-arginine biosynthesis; L-arginine from L-ornithine and carbamoyl phosphate: step 1/3. Its function is as follows. Has vitronectin and fibronectin-binding activity. In terms of biological role, reversibly catalyzes the transfer of the carbamoyl group from carbamoyl phosphate (CP) to the N(epsilon) atom of ornithine (ORN) to produce L-citrulline. In Staphylococcus epidermidis (strain ATCC 12228 / FDA PCI 1200), this protein is Ornithine carbamoyltransferase (argF).